An 841-amino-acid polypeptide reads, in one-letter code: MAP7 domain-containing protein 1 (841 aa).

2 disordered regions span residues 1–151 (MESG…ERAK) and 184–208 (EQRL…EKNK). Residues 22 to 52 (PPEPRPSPEGDPSPPPPPMSALVPDTPPDTP) show a composition bias toward pro residues. Threonine 47 and threonine 51 each carry phosphothreonine. Phosphoserine occurs at positions 70, 86, and 93. Phosphothreonine is present on threonine 97. Serine 113 and serine 116 each carry phosphoserine. Threonine 118 is modified (phosphothreonine). Phosphoserine is present on residues serine 123 and serine 125. Positions 128–222 (TKQEVKKAGE…AAIQRSVKKT (95 aa)) form a coiled coil. Residues 130–151 (QEVKKAGERHKLAKERREERAK) are compositionally biased toward basic and acidic residues. A phosphoserine mark is found at serine 254, serine 273, serine 313, serine 366, and serine 399. Residues 316–813 (TLPRNGRDQG…PSGDKSLSRT (498 aa)) are disordered. A compositionally biased stretch (polar residues) spans 365 to 377 (ASASPLTPCSVTR). Residues 405-435 (RRPEASPVQKKEKKDKERENEKEKSALARER) are compositionally biased toward basic and acidic residues. A coiled-coil region spans residues 412 to 441 (VQKKEKKDKERENEKEKSALARERSLKKRQ). Phosphoserine is present on residues serine 442, serine 446, serine 452, serine 454, and serine 460. The segment covering 460-473 (SPKSKARPSSPSTS) has biased composition (low complexity). Lysine 462 is covalently cross-linked (Glycyl lysine isopeptide (Lys-Gly) (interchain with G-Cter in SUMO2)). 2 positions are modified to phosphoserine: serine 479 and serine 496. Residues 479 to 497 (SPCPSPGPGHTLPPKPPSP) show a composition bias toward pro residues. Over residues 523–539 (PEDKSQSKRRASNEKES) the composition is skewed to basic and acidic residues. Phosphoserine is present on residues serine 544, serine 548, and serine 552. The segment covering 544–561 (SPAPSPAPSPTPAPPQKE) has biased composition (pro residues). Phosphothreonine is present on threonine 554. Low complexity predominate over residues 562-576 (QPPAETPTDAAVLTS). Pro residues predominate over residues 577–586 (PPAPAPPVTP). Residues 593–721 (TTDREEATRL…LEEIMKRTRK (129 aa)) adopt a coiled-coil conformation. Basic and acidic residues predominate over residues 594-735 (TDREEATRLL…ETKQKQDSKE (142 aa)). Residues serine 742 and serine 753 each carry the phosphoserine modification. Phosphothreonine occurs at positions 813 and 816. A Phosphoserine modification is found at serine 834.

This sequence belongs to the MAP7 family.

Its subcellular location is the cytoplasm. It is found in the cytoskeleton. It localises to the spindle. The protein localises to the microtubule organizing center. The protein resides in the centrosome. Its subcellular location is the midbody. Functionally, microtubule-stabilizing protein involved in the control of cell motility and neurite outgrowth. Facilitate microtubule stabilization through the maintenance of acetylated stable microtubules. The chain is MAP7 domain-containing protein 1 (MAP7D1) from Homo sapiens (Human).